Consider the following 87-residue polypeptide: Small ribosomal subunit protein bS20 (87 aa).

The interval 1-25 (MANIKSAKKRAVQSEKHRLHNASRR) is disordered.

It belongs to the bacterial ribosomal protein bS20 family.

Its function is as follows. Binds directly to 16S ribosomal RNA. The chain is Small ribosomal subunit protein bS20 from Baumannia cicadellinicola subsp. Homalodisca coagulata.